We begin with the raw amino-acid sequence, 145 residues long: Large ribosomal subunit protein uL13 (145 aa).

This sequence belongs to the universal ribosomal protein uL13 family. As to quaternary structure, part of the 50S ribosomal subunit.

Functionally, this protein is one of the early assembly proteins of the 50S ribosomal subunit, although it is not seen to bind rRNA by itself. It is important during the early stages of 50S assembly. The protein is Large ribosomal subunit protein uL13 of Bacillus velezensis (strain DSM 23117 / BGSC 10A6 / LMG 26770 / FZB42) (Bacillus amyloliquefaciens subsp. plantarum).